The following is a 317-amino-acid chain: Putative 2-hydroxyacid dehydrogenase SERP1888 (317 aa).

NAD(+) contacts are provided by residues 155–156 (EI), 234–236 (AGR), and aspartate 260. Arginine 236 is an active-site residue. Glutamate 265 is an active-site residue. The active-site Proton donor is the histidine 283. 283 to 286 (HIGN) serves as a coordination point for NAD(+).

The protein belongs to the D-isomer specific 2-hydroxyacid dehydrogenase family.

The protein is Putative 2-hydroxyacid dehydrogenase SERP1888 of Staphylococcus epidermidis (strain ATCC 35984 / DSM 28319 / BCRC 17069 / CCUG 31568 / BM 3577 / RP62A).